A 303-amino-acid polypeptide reads, in one-letter code: Probable serine/threonine-protein kinase FPV212 (303 aa).

The 279-residue stretch at 25-303 (WILGKQLGSG…NYESLKQMFL (279 aa)) folds into the Protein kinase domain. Residues 31-39 (LGSGGFGLV) and K54 each bind ATP. Residue D160 is the Proton acceptor of the active site.

The protein belongs to the protein kinase superfamily. Ser/Thr protein kinase family. Poxviruses subfamily.

It catalyses the reaction L-seryl-[protein] + ATP = O-phospho-L-seryl-[protein] + ADP + H(+). It carries out the reaction L-threonyl-[protein] + ATP = O-phospho-L-threonyl-[protein] + ADP + H(+). In Vertebrata (FPV), this protein is Probable serine/threonine-protein kinase FPV212.